We begin with the raw amino-acid sequence, 316 residues long: Transcription initiation factor IIB (316 aa).

The TFIIB-type zinc finger occupies 11–42 (PRVTCPNHPDAILVEDYRAGDMICPECGLVVG). The Zn(2+) site is built by C15, H18, C34, and C37. Phosphoserine is present on residues S70, S76, and S92. Repeat copies occupy residues 124-200 (MADR…LILK) and 218-294 (FCSN…LIYP). Positions 152, 154, 189, and 196 each coordinate DNA. The segment at 189–193 (KEIGR) is core promoter DNA-binding. K238 bears the N6-acetyllysine; by autocatalysis mark. A necessary for TATA box-bound complex TBP formation region spans residues 244 to 316 (LVPGRSPISV…DTPVDKLPQL (73 aa)). R248 is a DNA binding site. The interval 249–252 (SPIS) is core promoter DNA-binding. Residues K272, A281, T284, R286, and R290 each coordinate DNA. The tract at residues 283 to 286 (VTIR) is core promoter DNA-binding.

This sequence belongs to the TFIIB family. Found in a ternary complex with TATA box-bound TBP. Part of a TFIID-containing RNA polymerase II pre-initiation complex (PIC) that is composed of TBP and at least GTF2A1, GTF2A2, GTF2E1, GTF2E2, GTF2F1, GTF2H2, GTF2H3, GTF2H4, GTF2H5, GTF2B, TCEA1, ERCC2, ERCC3, TAF1, TAF2, TAF3, TAF4, TAF5, TAF6, TAF7, TAF8, TAF9, TAF10, TAF11, TAF12 and TAF13. Associates with TFIID-TFIIA (DA complex) to form TFIID-TFIIA-TFIIB (DAB complex), which is then recognized by RNA polymerase II (Pol II). Found in a RNA polymerase II initiation complex. Interacts (via C-terminus) with TBP; this interaction with TATA box-bound TBP guides Pol II into the PIC. Interacts (via N-terminus) with Pol II. Interacts (via C-terminus) with SSU72; this interaction is inhibited by SYMPK. Interacts with NR2F1; this interaction is direct. Interacts with PGR. Interacts with ESR1. Interacts with GTF2F1 (via C-terminus and preferentially via acetylated form); this interaction prevents binding of GTF2B to GTF2F2. Interacts with GTF2F2 (via N-terminus); this interaction is inhibited in presence of GTF2F1. Interacts with the transcription elongation factor TCEA2. Interacts with HSF1 (via transactivation domain). Interacts with GPBP1. In terms of processing, acetylated. Autoacetylated; autoacetylation at Lys-238 stimulates transcription activation.

The protein resides in the nucleus. It is found in the chromosome. It catalyses the reaction L-lysyl-[protein] + acetyl-CoA = N(6)-acetyl-L-lysyl-[protein] + CoA + H(+). Its function is as follows. General transcription factor that plays a role in transcription initiation by RNA polymerase II (Pol II). Involved in the pre-initiation complex (PIC) formation and Pol II recruitment at promoter DNA. Together with the TATA box-bound TBP forms the core initiation complex and provides a bridge between TBP and the Pol II-TFIIF complex. Released from the PIC early following the onset of transcription during the initiation and elongation transition and reassociates with TBP during the next transcription cycle. Associates with chromatin to core promoter-specific regions. Binds to two distinct DNA core promoter consensus sequence elements in a TBP-independent manner; these IIB-recognition elements (BREs) are localized immediately upstream (BREu), 5'-[GC][GC][GA]CGCC-3', and downstream (BREd), 5'-[GA]T[TGA][TG][GT][TG][TG]-3', of the TATA box element. Modulates transcription start site selection. Also exhibits autoacetyltransferase activity that contributes to the activated transcription. The polypeptide is Transcription initiation factor IIB (Pongo abelii (Sumatran orangutan)).